A 307-amino-acid polypeptide reads, in one-letter code: Homoserine kinase (307 aa).

86–96 contributes to the ATP binding site; sequence PIARGLGSSAA.

Belongs to the GHMP kinase family. Homoserine kinase subfamily.

It is found in the cytoplasm. It catalyses the reaction L-homoserine + ATP = O-phospho-L-homoserine + ADP + H(+). The protein operates within amino-acid biosynthesis; L-threonine biosynthesis; L-threonine from L-aspartate: step 4/5. Functionally, catalyzes the ATP-dependent phosphorylation of L-homoserine to L-homoserine phosphate. The chain is Homoserine kinase from Petrotoga mobilis (strain DSM 10674 / SJ95).